A 763-amino-acid chain; its full sequence is Phosphoglycerol transferase I (763 aa).

Transmembrane regions (helical) follow at residues 1 to 21 (MSEL…AWKA), 26 to 46 (WWFA…ITLF), 77 to 97 (ILPG…LGWI), and 108 to 128 (FGYS…SPAF).

This sequence belongs to the OpgB family.

The protein resides in the cell inner membrane. The enzyme catalyses a phosphatidylglycerol + a membrane-derived-oligosaccharide D-glucose = a 1,2-diacyl-sn-glycerol + a membrane-derived-oligosaccharide 6-(glycerophospho)-D-glucose.. Its pathway is glycan metabolism; osmoregulated periplasmic glucan (OPG) biosynthesis. Functionally, transfers a phosphoglycerol residue from phosphatidylglycerol to the membrane-bound nascent glucan backbones. The protein is Phosphoglycerol transferase I of Escherichia coli (strain UTI89 / UPEC).